The following is a 125-amino-acid chain: MGVMWGLISVAIASLAQLSLGFAMMRLPSIAHPLAFISGLGAFNAATLALFAGLAGYLVSVFCWQKTLHMLALSKAYALLSLSYVLVWVASMLLPGLQGAFSLKAMLGVLCIMAGVMLIFLPARS.

Residues 1–2 (MG) lie on the Cytoplasmic side of the membrane. Residues 3–23 (VMWGLISVAIASLAQLSLGFA) traverse the membrane as a helical segment. The Periplasmic segment spans residues 24-33 (MMRLPSIAHP). A helical membrane pass occupies residues 34-54 (LAFISGLGAFNAATLALFAGL). Over 55–76 (AGYLVSVFCWQKTLHMLALSKA) the chain is Cytoplasmic. A helical transmembrane segment spans residues 77–97 (YALLSLSYVLVWVASMLLPGL). Over 98–100 (QGA) the chain is Periplasmic. Residues 101-121 (FSLKAMLGVLCIMAGVMLIFL) traverse the membrane as a helical segment. The Cytoplasmic segment spans residues 122 to 125 (PARS).

The protein belongs to the ArnF family. Heterodimer of ArnE and ArnF.

The protein localises to the cell inner membrane. It participates in bacterial outer membrane biogenesis; lipopolysaccharide biosynthesis. In terms of biological role, translocates 4-amino-4-deoxy-L-arabinose-phosphoundecaprenol (alpha-L-Ara4N-phosphoundecaprenol) from the cytoplasmic to the periplasmic side of the inner membrane. This chain is Probable 4-amino-4-deoxy-L-arabinose-phosphoundecaprenol flippase subunit ArnF, found in Salmonella paratyphi A (strain ATCC 9150 / SARB42).